We begin with the raw amino-acid sequence, 328 residues long: GMP reductase (328 aa).

The Thioimidate intermediate role is filled by cysteine 176. 205–228 (IIADGGIRTHGDIAKSIRFGASMI) lines the NADP(+) pocket.

Belongs to the IMPDH/GMPR family. GuaC type 2 subfamily.

The catalysed reaction is IMP + NH4(+) + NADP(+) = GMP + NADPH + 2 H(+). Catalyzes the irreversible NADPH-dependent deamination of GMP to IMP. It functions in the conversion of nucleobase, nucleoside and nucleotide derivatives of G to A nucleotides, and in maintaining the intracellular balance of A and G nucleotides. This Streptococcus pneumoniae (strain P1031) protein is GMP reductase.